The following is a 114-amino-acid chain: Large ribosomal subunit protein bL20c (114 aa).

This sequence belongs to the bacterial ribosomal protein bL20 family.

Its subcellular location is the plastid. It is found in the chloroplast. Functionally, binds directly to 23S ribosomal RNA and is necessary for the in vitro assembly process of the 50S ribosomal subunit. It is not involved in the protein synthesizing functions of that subunit. The polypeptide is Large ribosomal subunit protein bL20c (rpl20) (Trieres chinensis (Marine centric diatom)).